Here is a 132-residue protein sequence, read N- to C-terminus: Fluoride-specific ion channel FluC 2 (132 aa).

Helical transmembrane passes span 8 to 28 (LQLELLELLLVGAGAVPGALL), 41 to 61 (LLVNVLGAALLGFLSGLPAAP), 66 to 86 (LLGIGFCGSVTTFSSWMLAAV), and 96 to 116 (AALGLIGLTLGLGLGAAALGF). Na(+) contacts are provided by Gly-73 and Thr-76.

It belongs to the fluoride channel Fluc/FEX (TC 1.A.43) family.

The protein localises to the cell inner membrane. It catalyses the reaction fluoride(in) = fluoride(out). Its activity is regulated as follows. Na(+) is not transported, but it plays an essential structural role and its presence is essential for fluoride channel function. Fluoride-specific ion channel. Important for reducing fluoride concentration in the cell, thus reducing its toxicity. In Synechococcus sp. (strain CC9605), this protein is Fluoride-specific ion channel FluC 2.